Consider the following 791-residue polypeptide: Protein CLASP-2 (791 aa).

Composition is skewed to low complexity over residues 259–271, 323–334, and 372–381; these read ASDAASSSTSVNS, RTPNTRPMTTRT, and SQPGSRNGSP. Disordered stretches follow at residues 259-283, 315-391, and 422-454; these read ASDAASSSTSVNSERGSAPFRSKLS, TRMT…TGTL, and AMNTAKESLGQPSRTEDDEFLLPKRKPKTPQKS. The segment covering 422-434 has biased composition (polar residues); sequence AMNTAKESLGQPS.

It belongs to the CLASP family. In terms of assembly, interacts with hcp-1 and hcp-2.

It localises to the cytoplasm. Its subcellular location is the cytoskeleton. The protein resides in the microtubule organizing center. It is found in the centrosome. The protein localises to the chromosome. It localises to the centromere. Its subcellular location is the kinetochore. The protein resides in the spindle. Probable microtubule plus-end tracking protein that promotes the stabilization of dynamic microtubules. Required for the formation of mitotic and meiotic spindles. Specifically promotes the polymerization of kinetochore-bound microtubules. Also required for cytoplasmic streaming. The chain is Protein CLASP-2 (cls-2) from Caenorhabditis briggsae.